A 356-amino-acid polypeptide reads, in one-letter code: NADH-quinone oxidoreductase subunit H (356 aa).

The next 8 membrane-spanning stretches (helical) occupy residues 18–38 (IVMV…IAYI), 87–107 (GVFL…WAVI), 120–140 (VGIL…IMAG), 166–186 (IGFV…SAIV), 202–222 (WLTF…VFYV), 265–285 (AITT…LPPI), 292–312 (WVPG…LFAM), and 328–348 (LGWK…AGVL).

Belongs to the complex I subunit 1 family. NDH-1 is composed of 14 different subunits. Subunits NuoA, H, J, K, L, M, N constitute the membrane sector of the complex.

Its subcellular location is the cell inner membrane. It catalyses the reaction a quinone + NADH + 5 H(+)(in) = a quinol + NAD(+) + 4 H(+)(out). Functionally, NDH-1 shuttles electrons from NADH, via FMN and iron-sulfur (Fe-S) centers, to quinones in the respiratory chain. The immediate electron acceptor for the enzyme in this species is believed to be ubiquinone. Couples the redox reaction to proton translocation (for every two electrons transferred, four hydrogen ions are translocated across the cytoplasmic membrane), and thus conserves the redox energy in a proton gradient. This subunit may bind ubiquinone. This Nitrobacter hamburgensis (strain DSM 10229 / NCIMB 13809 / X14) protein is NADH-quinone oxidoreductase subunit H.